The following is a 663-amino-acid chain: Beta-galactosidase YesZ (663 aa).

Position 107 (arginine 107) interacts with substrate. Cysteine 111 lines the Zn(2+) pocket. Asparagine 145 contacts substrate. The active-site Proton donor is the glutamate 146. Zn(2+) contacts are provided by cysteine 154, cysteine 156, and cysteine 159. The Nucleophile role is filled by glutamate 297. Residue 346 to 349 participates in substrate binding; that stretch reads EQPH.

Belongs to the glycosyl hydrolase 42 family. In terms of assembly, homotrimer.

The catalysed reaction is Hydrolysis of terminal non-reducing beta-D-galactose residues in beta-D-galactosides.. Functionally, may play a role in the degradation of rhamnogalacturonan derived from plant cell walls. This Bacillus licheniformis (strain ATCC 14580 / DSM 13 / JCM 2505 / CCUG 7422 / NBRC 12200 / NCIMB 9375 / NCTC 10341 / NRRL NRS-1264 / Gibson 46) protein is Beta-galactosidase YesZ (yesZ).